A 975-amino-acid chain; its full sequence is Protein HIRA (975 aa).

7 WD repeats span residues 10-50 (RHEG…KDND), 64-103 (DHFG…GTSE), 123-162 (GHTA…CTAV), 165-204 (GHSS…LAHR), 214-256 (GSTF…ATFD), 259-331 (GHNA…PLFV), and 335-374 (FFTQ…LGYR). The segment covering 418–433 (KKVSSVQQFQSPPKVS) has biased composition (low complexity). Disordered regions lie at residues 418–510 (KKVS…RSQN) and 948–975 (NVEQ…NGAS). Residues 435-445 (DAPNPSTSVPN) show a composition bias toward polar residues. Residues 478–492 (KQREYRRPDGRKRII) show a composition bias toward basic and acidic residues. The span at 499-510 (PSNQDMSNRSQN) shows a compositional bias: polar residues. Residues 923–954 (ATNRKVQRLLNEFMDLLSEYEAAETNVEQMDV) are a coiled coil.

The protein belongs to the WD repeat HIR1 family.

Its subcellular location is the nucleus. Histone chaperone involved in maintining knox genes silencing throughout leaf development. In Oryza sativa subsp. japonica (Rice), this protein is Protein HIRA.